The primary structure comprises 483 residues: Proline--tRNA ligase (483 aa).

It belongs to the class-II aminoacyl-tRNA synthetase family. ProS type 3 subfamily. In terms of assembly, homodimer.

It is found in the cytoplasm. It catalyses the reaction tRNA(Pro) + L-proline + ATP = L-prolyl-tRNA(Pro) + AMP + diphosphate. Functionally, catalyzes the attachment of proline to tRNA(Pro) in a two-step reaction: proline is first activated by ATP to form Pro-AMP and then transferred to the acceptor end of tRNA(Pro). The chain is Proline--tRNA ligase from Natranaerobius thermophilus (strain ATCC BAA-1301 / DSM 18059 / JW/NM-WN-LF).